Reading from the N-terminus, the 216-residue chain is Thiamine-phosphate synthase (216 aa).

4-amino-2-methyl-5-(diphosphooxymethyl)pyrimidine-binding positions include 39 to 43 and Asn71; that span reads QLRRK. The Mg(2+) site is built by Asp72 and Asp91. Ser109 contacts 4-amino-2-methyl-5-(diphosphooxymethyl)pyrimidine. Residue 136-138 participates in 2-[(2R,5Z)-2-carboxy-4-methylthiazol-5(2H)-ylidene]ethyl phosphate binding; that stretch reads SPT. 4-amino-2-methyl-5-(diphosphooxymethyl)pyrimidine is bound at residue Lys139. Residues Gly172 and 192–193 contribute to the 2-[(2R,5Z)-2-carboxy-4-methylthiazol-5(2H)-ylidene]ethyl phosphate site; that span reads IT.

Belongs to the thiamine-phosphate synthase family. Mg(2+) is required as a cofactor.

It carries out the reaction 2-[(2R,5Z)-2-carboxy-4-methylthiazol-5(2H)-ylidene]ethyl phosphate + 4-amino-2-methyl-5-(diphosphooxymethyl)pyrimidine + 2 H(+) = thiamine phosphate + CO2 + diphosphate. It catalyses the reaction 2-(2-carboxy-4-methylthiazol-5-yl)ethyl phosphate + 4-amino-2-methyl-5-(diphosphooxymethyl)pyrimidine + 2 H(+) = thiamine phosphate + CO2 + diphosphate. The catalysed reaction is 4-methyl-5-(2-phosphooxyethyl)-thiazole + 4-amino-2-methyl-5-(diphosphooxymethyl)pyrimidine + H(+) = thiamine phosphate + diphosphate. It participates in cofactor biosynthesis; thiamine diphosphate biosynthesis; thiamine phosphate from 4-amino-2-methyl-5-diphosphomethylpyrimidine and 4-methyl-5-(2-phosphoethyl)-thiazole: step 1/1. Functionally, condenses 4-methyl-5-(beta-hydroxyethyl)thiazole monophosphate (THZ-P) and 2-methyl-4-amino-5-hydroxymethyl pyrimidine pyrophosphate (HMP-PP) to form thiamine monophosphate (TMP). The protein is Thiamine-phosphate synthase of Bordetella avium (strain 197N).